Reading from the N-terminus, the 25-residue chain is Aurein-5.1 (25 aa).

This sequence belongs to the frog skin active peptide (FSAP) family. Aurein subfamily. In terms of tissue distribution, expressed by the skin dorsal glands.

The protein resides in the secreted. Has no antimicrobial or anticancer activity. The sequence is that of Aurein-5.1 from Ranoidea aurea (Green and golden bell frog).